A 101-amino-acid polypeptide reads, in one-letter code: Small ribosomal subunit protein uS14 (101 aa).

The protein belongs to the universal ribosomal protein uS14 family. Part of the 30S ribosomal subunit. Contacts proteins S3 and S10.

Binds 16S rRNA, required for the assembly of 30S particles and may also be responsible for determining the conformation of the 16S rRNA at the A site. This chain is Small ribosomal subunit protein uS14, found in Acinetobacter baumannii (strain SDF).